A 234-amino-acid chain; its full sequence is Conidial surface nicotinamide adenine dinucleotide glycohydrolase nadA (234 aa).

A signal peptide spans 1 to 20 (MIFTNAILVISALLPATVLS). The segment at 21 to 117 (LQHTEDSLFP…LDTEEQPILG (97 aa)) is thump. Cystine bridges form between cysteine 33–cysteine 80 and cysteine 38–cysteine 50. 3 N-linked (GlcNAc...) asparagine glycosylation sites follow: asparagine 45, asparagine 95, and asparagine 118. Residues 120 to 212 (TLPVGMKLDR…GLIDDGYLRR (93 aa)) enclose the TNT domain. Residue arginine 129 is part of the active site. The NAD(+) site is built by phenylalanine 130, threonine 136, and arginine 148. The active site involves glutamine 194. Ca(2+)-binding residues include serine 216, aspartate 219, glutamate 220, and glutamate 223.

Belongs to the fungal surface NADase family. In terms of assembly, homodimer. Post-translationally, N-glycosylated.

It localises to the secreted. It carries out the reaction NAD(+) + H2O = ADP-D-ribose + nicotinamide + H(+). It catalyses the reaction NADP(+) + H2O = ADP-D-ribose 2'-phosphate + nicotinamide + H(+). With respect to regulation, the catalytic activity is positively regulated by calcium via its binding to the calcium-binding site. Functionally, conidial surface nicotinamide adenine dinucleotide glycohydrolase that cleave NAD(+) and NADP(+) but not their reduced counterparts, NADH and NADPH. Lacks both ADP-ribosyl cyclase and base exchange activity and does not mediate synthesis of calcium messengers cADPR or NAADP. Plays a role in pathogenicity by depleting the host's NAD(+) pool. The protein is Conidial surface nicotinamide adenine dinucleotide glycohydrolase nadA of Aspergillus fumigatus (strain ATCC MYA-4609 / CBS 101355 / FGSC A1100 / Af293) (Neosartorya fumigata).